The chain runs to 250 residues: Trypsin (250 aa).

The signal sequence occupies residues M1–A15. The propeptide at V16–R22 is activation peptide. A Peptidase S1 domain is found at I23–E247. 6 disulfide bridges follow: C29/C163, C47/C63, C133/C236, C140/C209, C174/C188, and C199/C223. Catalysis depends on charge relay system residues H62 and D106. Catalysis depends on S203, which acts as the Charge relay system.

It belongs to the peptidase S1 family.

Its subcellular location is the secreted. The protein resides in the extracellular space. It catalyses the reaction Preferential cleavage: Arg-|-Xaa, Lys-|-Xaa.. The sequence is that of Trypsin from Pleuronectes platessa (European plaice).